The chain runs to 125 residues: Probable 4-amino-4-deoxy-L-arabinose-phosphoundecaprenol flippase subunit ArnF (125 aa).

The Cytoplasmic segment spans residues 1-2; that stretch reads MG. The helical transmembrane segment at 3–23 threads the bilayer; sequence VMWGLISVAIASLAQLSLGFA. The Periplasmic portion of the chain corresponds to 24 to 33; the sequence is MMRLPSIAHP. The helical transmembrane segment at 34–54 threads the bilayer; the sequence is LAFISGLGAFNAATLALFAGL. At 55–76 the chain is on the cytoplasmic side; that stretch reads AGYLVSVFCWQKTLHMLALSKA. The helical transmembrane segment at 77-97 threads the bilayer; that stretch reads YALLSLSYVLVWVASMLLPGL. At 98–100 the chain is on the periplasmic side; that stretch reads QGA. Residues 101–121 traverse the membrane as a helical segment; it reads FSLKAMLGVLCIMAGVMLIFL. Topologically, residues 122–125 are cytoplasmic; sequence PARS.

Belongs to the ArnF family. Heterodimer of ArnE and ArnF.

The protein resides in the cell inner membrane. It participates in bacterial outer membrane biogenesis; lipopolysaccharide biosynthesis. Functionally, translocates 4-amino-4-deoxy-L-arabinose-phosphoundecaprenol (alpha-L-Ara4N-phosphoundecaprenol) from the cytoplasmic to the periplasmic side of the inner membrane. This chain is Probable 4-amino-4-deoxy-L-arabinose-phosphoundecaprenol flippase subunit ArnF, found in Salmonella paratyphi A (strain ATCC 9150 / SARB42).